Consider the following 225-residue polypeptide: Holliday junction branch migration complex subunit RuvA (225 aa).

The domain I stretch occupies residues 1-71 (MISWINGDLV…EDSDLLFGFT (71 aa)). The domain II stretch occupies residues 72–150 (SNEQKNFFIE…SEILSEEEKS (79 aa)). The tract at residues 151-161 (KGELEIKDPEI) is flexible linker. Residues 161–225 (INKMIEDLQL…LDEDSSNIAR (65 aa)) are domain III.

The protein belongs to the RuvA family. As to quaternary structure, homotetramer. Forms an RuvA(8)-RuvB(12)-Holliday junction (HJ) complex. HJ DNA is sandwiched between 2 RuvA tetramers; dsDNA enters through RuvA and exits via RuvB. An RuvB hexamer assembles on each DNA strand where it exits the tetramer. Each RuvB hexamer is contacted by two RuvA subunits (via domain III) on 2 adjacent RuvB subunits; this complex drives branch migration. In the full resolvosome a probable DNA-RuvA(4)-RuvB(12)-RuvC(2) complex forms which resolves the HJ.

It localises to the cytoplasm. The RuvA-RuvB-RuvC complex processes Holliday junction (HJ) DNA during genetic recombination and DNA repair, while the RuvA-RuvB complex plays an important role in the rescue of blocked DNA replication forks via replication fork reversal (RFR). RuvA specifically binds to HJ cruciform DNA, conferring on it an open structure. The RuvB hexamer acts as an ATP-dependent pump, pulling dsDNA into and through the RuvAB complex. HJ branch migration allows RuvC to scan DNA until it finds its consensus sequence, where it cleaves and resolves the cruciform DNA. The sequence is that of Holliday junction branch migration complex subunit RuvA from Prochlorococcus marinus (strain MIT 9301).